Here is a 108-residue protein sequence, read N- to C-terminus: Glutaredoxin-1 (108 aa).

A Glutaredoxin domain is found at 3–106 (EEFVQQRLAN…DILSSIGVLR (104 aa)). Cysteine 23 and cysteine 26 are oxidised to a cystine.

It belongs to the glutaredoxin family.

Its subcellular location is the virion. Functionally, displays thioltransferase and dehydroascorbate reductase activities. The chain is Glutaredoxin-1 (OPG075) from Vaccinia virus (strain Copenhagen) (VACV).